The following is a 420-amino-acid chain: Glucose-1-phosphate adenylyltransferase (420 aa).

Alpha-D-glucose 1-phosphate contacts are provided by residues Tyr108, Gly173, 188–189, and Ser206; that span reads EK.

The protein belongs to the bacterial/plant glucose-1-phosphate adenylyltransferase family. In terms of assembly, homotetramer.

It carries out the reaction alpha-D-glucose 1-phosphate + ATP + H(+) = ADP-alpha-D-glucose + diphosphate. It functions in the pathway glycan biosynthesis; glycogen biosynthesis. Its function is as follows. Involved in the biosynthesis of ADP-glucose, a building block required for the elongation reactions to produce glycogen. Catalyzes the reaction between ATP and alpha-D-glucose 1-phosphate (G1P) to produce pyrophosphate and ADP-Glc. The sequence is that of Glucose-1-phosphate adenylyltransferase from Paraburkholderia phytofirmans (strain DSM 17436 / LMG 22146 / PsJN) (Burkholderia phytofirmans).